Consider the following 248-residue polypeptide: Pyridoxine 5'-phosphate synthase (248 aa).

Residue Asn12 coordinates 3-amino-2-oxopropyl phosphate. 1-deoxy-D-xylulose 5-phosphate is bound at residue Asp14 to His15. Arg23 contacts 3-amino-2-oxopropyl phosphate. His48 acts as the Proton acceptor in catalysis. 1-deoxy-D-xylulose 5-phosphate contacts are provided by Arg50 and His55. Catalysis depends on Glu75, which acts as the Proton acceptor. Thr105 provides a ligand contact to 1-deoxy-D-xylulose 5-phosphate. His196 (proton donor) is an active-site residue. Residues Gly197 and Gly218–His219 contribute to the 3-amino-2-oxopropyl phosphate site.

Belongs to the PNP synthase family. Homooctamer; tetramer of dimers.

The protein resides in the cytoplasm. It carries out the reaction 3-amino-2-oxopropyl phosphate + 1-deoxy-D-xylulose 5-phosphate = pyridoxine 5'-phosphate + phosphate + 2 H2O + H(+). It functions in the pathway cofactor biosynthesis; pyridoxine 5'-phosphate biosynthesis; pyridoxine 5'-phosphate from D-erythrose 4-phosphate: step 5/5. In terms of biological role, catalyzes the complicated ring closure reaction between the two acyclic compounds 1-deoxy-D-xylulose-5-phosphate (DXP) and 3-amino-2-oxopropyl phosphate (1-amino-acetone-3-phosphate or AAP) to form pyridoxine 5'-phosphate (PNP) and inorganic phosphate. The chain is Pyridoxine 5'-phosphate synthase from Pseudomonas fluorescens (strain ATCC BAA-477 / NRRL B-23932 / Pf-5).